The following is a 294-amino-acid chain: 33 kDa chaperonin (294 aa).

Disulfide bonds link Cys-239–Cys-241 and Cys-272–Cys-275.

Belongs to the HSP33 family. In terms of processing, under oxidizing conditions two disulfide bonds are formed involving the reactive cysteines. Under reducing conditions zinc is bound to the reactive cysteines and the protein is inactive.

The protein localises to the cytoplasm. Its function is as follows. Redox regulated molecular chaperone. Protects both thermally unfolding and oxidatively damaged proteins from irreversible aggregation. Plays an important role in the bacterial defense system toward oxidative stress. This Listeria monocytogenes serotype 4b (strain CLIP80459) protein is 33 kDa chaperonin.